The primary structure comprises 45 residues: uncharacterized protein (45 aa).

This is an uncharacterized protein from Escherichia coli (Bacteriophage T4).